A 101-amino-acid chain; its full sequence is Large ribosomal subunit protein uL24 (101 aa).

Belongs to the universal ribosomal protein uL24 family. Part of the 50S ribosomal subunit.

One of two assembly initiator proteins, it binds directly to the 5'-end of the 23S rRNA, where it nucleates assembly of the 50S subunit. In terms of biological role, one of the proteins that surrounds the polypeptide exit tunnel on the outside of the subunit. This is Large ribosomal subunit protein uL24 from Paracoccus denitrificans (strain Pd 1222).